An 856-amino-acid chain; its full sequence is Paladin (856 aa).

Residues 1-16 show a composition bias toward low complexity; the sequence is MGTTASTAQQTVSAGT. Residues 1–29 are disordered; that stretch reads MGTTASTAQQTVSAGTPFEGLQGSGTMDS. The N-myristoyl glycine moiety is linked to residue Gly2. Ser86 is modified (phosphoserine).

The protein belongs to the paladin family. In terms of tissue distribution, expressed in endothelial cells, and in certain larger vessels, in mural cells. In the brain, possibly expressed in microglia. Expressed in peripheral blood mononuclear cells (at protein level).

Its subcellular location is the cytoplasm. The protein localises to the cytosol. The polypeptide is Paladin (PALD1) (Homo sapiens (Human)).